A 560-amino-acid chain; its full sequence is Glutamine--tRNA ligase (560 aa).

A 'HIGH' region motif is present at residues Pro-36 to His-46. ATP contacts are provided by residues Glu-37–Asn-39 and His-43–Ala-49. L-glutamine is bound by residues Asp-69 and Tyr-214. Arg-263 to Leu-264 serves as a coordination point for ATP. Positions Leu-270–Arg-274 match the 'KMSKS' region motif.

It belongs to the class-I aminoacyl-tRNA synthetase family. As to quaternary structure, monomer.

It localises to the cytoplasm. The catalysed reaction is tRNA(Gln) + L-glutamine + ATP = L-glutaminyl-tRNA(Gln) + AMP + diphosphate. The chain is Glutamine--tRNA ligase from Chromobacterium violaceum (strain ATCC 12472 / DSM 30191 / JCM 1249 / CCUG 213 / NBRC 12614 / NCIMB 9131 / NCTC 9757 / MK).